The sequence spans 844 residues: DNA mismatch repair protein MutS (844 aa).

602–609 (GPNMSGKS) provides a ligand contact to ATP.

This sequence belongs to the DNA mismatch repair MutS family.

This protein is involved in the repair of mismatches in DNA. It is possible that it carries out the mismatch recognition step. This protein has a weak ATPase activity. In Streptococcus pneumoniae serotype 19F (strain G54), this protein is DNA mismatch repair protein MutS.